A 964-amino-acid chain; its full sequence is Insulin receptor substrate 1 (964 aa).

Positions 8 to 109 constitute a PH domain; it reads GMALSGNLKK…WLDKLLVLQR (102 aa). Residues 122-236 enclose the IRS-type PTB domain; it reads YDQVWQVVIQ…SAMSAKTESN (115 aa). The segment at 249 to 268 is disordered; that stretch reads LSHEPMRKRSSSANEASKPI. Phosphoserine occurs at positions 286, 287, and 342. Tyrosine 410 is subject to Phosphotyrosine; by INSR. Positions 410-413 match the YXXM motif 1 motif; sequence YIPM. The segment at 527-560 is disordered; that stretch reads ASNRSQSSIGKEGSSYGSSANRQKKSTSAPLLSL. The span at 528–560 shows a compositional bias: polar residues; sequence SNRSQSSIGKEGSSYGSSANRQKKSTSAPLLSL. Residue serine 554 is modified to Phosphoserine. The YXXM motif 2 motif lies at 640 to 643; that stretch reads YLEM. The segment covering 698–712 has biased composition (basic and acidic residues); that stretch reads EKWREQPSRSEEKKS. The tract at residues 698-735 is disordered; the sequence is EKWREQPSRSEEKKSNSPLNDNPFSLKPTNVESKSKSH. The span at 713 to 729 shows a compositional bias: polar residues; it reads NSPLNDNPFSLKPTNVE. Tyrosine 907 carries the phosphotyrosine; by INSR modification. The interval 921-964 is disordered; the sequence is AKYLKRGSRESPPVSACPEDGNTYARIDFDQSDSSSSSSNIFNT. Serine 928 and serine 931 each carry phosphoserine. Tyrosine 944 bears the Phosphotyrosine; by INSR mark. Low complexity predominate over residues 952-964; the sequence is SDSSSSSSNIFNT.

In terms of assembly, bindings to phosphatidylinositol 3-kinase and SHP2.

Its function is as follows. Activates phosphatidylinositol 3-kinase when bound to the regulatory p85 subunit. May mediate the control of various cellular processes by insulin-like peptides. When phosphorylated by the insulin receptor binds specifically to various cellular proteins containing SH2 domains. Involved in control of cell proliferation, cell size, and body and organ growth throughout development. Also has a role in a signaling pathway controlling the physiological response required to endure periods of low nutrient conditions. Insulin/insulin-like growth factor (IGF) signaling pathway has a role in regulating aging and is necessary in the ovary for vitellogenic maturation. In Drosophila sechellia (Fruit fly), this protein is Insulin receptor substrate 1.